Here is a 2424-residue protein sequence, read N- to C-terminus: Voltage-dependent P/Q-type calcium channel subunit alpha-1A (2424 aa).

Residues 1 to 98 (MARFGDEMPA…KYAKKITEWP (98 aa)) are Cytoplasmic-facing. The stretch at 85 to 363 (NVVRKYAKKI…LVLGVLSGEF (279 aa)) is one I repeat. The chain crosses the membrane as a helical span at residues 99–117 (PFEYMILATIIANCIVLAL). At 118–135 (EQHLPDDDKTPMSERLDD) the chain is on the extracellular side. Residues 136-155 (TEPYFIGIFCFEAGIKIIAL) traverse the membrane as a helical segment. Residues 156 to 167 (GFAFHKGSYLRN) are Cytoplasmic-facing. A helical membrane pass occupies residues 168–185 (GWNVMDFVVVLTGILATV). The Extracellular portion of the chain corresponds to 186–190 (GTEFD). A helical membrane pass occupies residues 191 to 209 (LRTLRAVRVLRPLKLVSGI). At 210–228 (PSLQVVLKSIMKAMIPLLQ) the chain is on the cytoplasmic side. Residues 229–248 (IGLLLFFAILIFAIIGLEFY) traverse the membrane as a helical segment. Over 249–335 (MGKFHTTCFE…NSNDASGNTW (87 aa)) the chain is Extracellular. A glycan (N-linked (GlcNAc...) asparagine) is linked at asparagine 283. Residue glutamate 318 participates in Ca(2+) binding. A helical membrane pass occupies residues 336 to 360 (NWLYFIPLIIIGSFFMLNLVLGVLS). The Cytoplasmic portion of the chain corresponds to 361–487 (GEFAKERERV…FYIRRMVKTQ (127 aa)). Positions 383-400 (QQIERELNGYMEWISKAE) are binding to the beta subunit. Threonine 409 carries the post-translational modification Phosphothreonine. Residues serine 448 and serine 451 each carry the phosphoserine modification. The II repeat unit spans residues 473–717 (ERRMRFYIRR…VFLAIAVDNL (245 aa)). A helical membrane pass occupies residues 488–506 (AFYWTVLSLVALNTLCVAI). Over 507-521 (VHYNQPEWLSDFLYY) the chain is Extracellular. The chain crosses the membrane as a helical span at residues 522-541 (AEFIFLGLFMSEMFIKMYGL). The Cytoplasmic portion of the chain corresponds to 542–549 (GTRPYFHS). A helical membrane pass occupies residues 550 to 568 (SFNCFDCGVIIGSIFEVIW). Topologically, residues 569 to 578 (AVIKPGTSFG) are extracellular. A helical membrane pass occupies residues 579 to 597 (ISVLRALRLLRIFKVTKYW). The Cytoplasmic segment spans residues 598 to 616 (ASLRNLVVSLLNSMKSIIS). The helical transmembrane segment at 617-636 (LLFLLFLFIVVFALLGMQLF) threads the bilayer. Topologically, residues 637–689 (GGQFNFDEGTPPTNFDTFPAAIMTVFQILTGEDWNEVMYDGIKSQGGVQGGMV) are extracellular. Ca(2+) is bound at residue glutamate 668. The chain crosses the membrane as a helical span at residues 690 to 714 (FSIYFIVLTLFGNYTLLNVFLAIAV). Topologically, residues 715 to 1253 (DNLANAQELT…RLCHYILNLR (539 aa)) are cytoplasmic. Phosphoserine is present on residues serine 750, serine 753, and serine 790. Positions 819 to 1229 (HLDRPLVVDP…GEDGPKPMPP (411 aa)) are disordered. Composition is skewed to basic and acidic residues over residues 893–912 (ELSR…REGG), 922–931 (EAERGKAGDP), and 969–996 (RPGE…RSGE). The segment covering 1053 to 1065 (PNLSTTRPIQQDL) has biased composition (polar residues). Serine 1091 and serine 1104 each carry phosphoserine. Residues 1110 to 1140 (SSTDPAGPTPATAANPQNSTASRRTPNNPGN) show a composition bias toward low complexity. Residues 1151–1168 (ENSLIVTNPSTAQTNSAK) are compositionally biased toward polar residues. Positions 1204-1214 (LPKKEDEKKEE) are enriched in basic and acidic residues. The stretch at 1240–1523 (NPLRRLCHYI…IFVALIIITF (284 aa)) is one III repeat. A helical transmembrane segment spans residues 1254–1272 (YFEMCILMVIAMSSIALAA). The Extracellular portion of the chain corresponds to 1273 to 1288 (EDPVQPNAPRNNVLRY). Residues 1289 to 1308 (FDYVFTGVFTFEMVIKMIDL) form a helical membrane-spanning segment. Residues 1309–1320 (GLVLHQGAYFRD) lie on the Cytoplasmic side of the membrane. Residues 1321 to 1339 (LWNILDFIVVSGALVAFAF) form a helical membrane-spanning segment. Over 1340–1350 (TGNSKGKDINT) the chain is Extracellular. A helical membrane pass occupies residues 1351-1369 (IKSLRVLRVLRPLKTIKRL). Residues 1370–1388 (PKLKAVFDCVVNSLKNVFN) are Cytoplasmic-facing. A helical membrane pass occupies residues 1389 to 1408 (ILIVYMLFMFIFAVVAVQLF). At 1409–1495 (KGKFFHCTDE…QGPSPGYRME (87 aa)) the chain is on the extracellular side. Glutamate 1469 is a binding site for Ca(2+). Residues 1496-1520 (MSIFYVVYFVVFPFFFVNIFVALII) traverse the membrane as a helical segment. Residues 1521 to 1575 (ITFQEQGDKMMEEYSLEKNERACIDFAISAKPLTRHMPQNKQSFQYRMWQFVVSP) are Cytoplasmic-facing. An IV repeat occupies 1560-1823 (NKQSFQYRMW…LFVAVIMDNF (264 aa)). Residues 1576 to 1604 (PFEYTIMAMIALNTIVLMMKFYGASVAYD) form a helical membrane-spanning segment. The Extracellular segment spans residues 1605–1609 (NALKV). Residues 1610-1629 (FNIVFTSLFSLECLLKVLAF) form a helical membrane-spanning segment. Residues 1630 to 1637 (GILNYFRD) are Cytoplasmic-facing. A helical membrane pass occupies residues 1638 to 1656 (AWNIFDFVTVLGSITDILV). The Extracellular segment spans residues 1657-1665 (TEFGNNFIN). A glycan (N-linked (GlcNAc...) asparagine) is linked at asparagine 1665. The chain crosses the membrane as a helical span at residues 1666-1684 (LSFLRLFRAARLIKLLRQG). The Cytoplasmic segment spans residues 1685–1703 (YTIRILLWTFVQSFKALPY). Residues 1704-1723 (VCLLIAMLFFIYAIIGMQVF) traverse the membrane as a helical segment. The Extracellular portion of the chain corresponds to 1724-1795 (GNIGIDMEDE…ILTPECGNEF (72 aa)). A helical transmembrane segment spans residues 1796–1820 (AYFYFVSFIFLCSFLMLNLFVAVIM). The Cytoplasmic portion of the chain corresponds to 1821–2424 (DNFEYLTRDS…GGPRASAPSP (604 aa)). At threonine 1993 the chain carries Phosphothreonine. The interval 1997-2424 (FQRMEPPPDE…GGPRASAPSP (428 aa)) is disordered. Polar residues predominate over residues 2037–2053 (SWVTQRAQEMFQKTGTW). Phosphoserine is present on residues serine 2054, serine 2072, serine 2084, serine 2086, serine 2127, and serine 2148. Basic and acidic residues predominate over residues 2074–2090 (EMREMSQDGYSDSEHCL). Basic and acidic residues-rich tracts occupy residues 2142–2159 (RRLD…ENQR) and 2200–2210 (PSREREQERGR). Positions 2211 to 2229 (PKDRKHRPHHHHHHHHHPG) are enriched in basic residues. Residues 2249-2262 (VARVRPARAPALAH) are compositionally biased toward low complexity. Positions 2280–2305 (RRARRPRPRQRRRPRRRRGGGGRALR) are enriched in basic residues.

This sequence belongs to the calcium channel alpha-1 subunit (TC 1.A.1.11) family. CACNA1A subfamily. In terms of assembly, voltage-dependent calcium channels are multisubunit complexes, consisting of alpha-1, alpha-2, beta and delta subunits in a 1:1:1:1 ratio. The channel activity is directed by the pore-forming and voltage-sensitive alpha-1 subunit. In many cases, this subunit is sufficient to generate voltage-sensitive calcium channel activity. The auxiliary subunits beta and alpha-2/delta linked by a disulfide bridge regulate the channel activity. Interacts with CABP1. Interacts with the spider omega-agatoxin-IVA (AC P30288). Interacts with TSPOAP1. Brain specific. Purkinje cells contain predominantly P-type VSCC, the Q-type being a prominent calcium current in cerebellar granule cells.

The protein localises to the cell membrane. It catalyses the reaction Ca(2+)(in) = Ca(2+)(out). In terms of biological role, voltage-sensitive calcium channels (VSCC) mediate the entry of calcium ions into excitable cells and are also involved in a variety of calcium-dependent processes, including muscle contraction, hormone or neurotransmitter release, gene expression, cell motility, cell division and cell death. The isoform alpha-1A gives rise to P and/or Q-type calcium currents. P/Q-type calcium channels belong to the 'high-voltage activated' (HVA) group and are specifically blocked by the spider omega-agatoxin-IVA (AC P54282). They are however insensitive to dihydropyridines (DHP). The chain is Voltage-dependent P/Q-type calcium channel subunit alpha-1A (CACNA1A) from Oryctolagus cuniculus (Rabbit).